The following is a 217-amino-acid chain: Adenylate kinase (217 aa).

ATP is bound at residue 10 to 15 (GAGKGT). Residues 30 to 59 (STGDIFRSNIKNGTELGRKAKEYIDKGLLV) form an NMP region. Residues Thr31, Arg36, 57 to 59 (LLV), 85 to 88 (GFPR), and Gln92 each bind AMP. Positions 126 to 163 (GRRVCSKCGMSYHIVYNQPKVENICDSCNGELIQRDDD) are LID. Arg127 is an ATP binding site. Residues Cys130 and Cys133 each contribute to the Zn(2+) site. Residue 136-137 (SY) coordinates ATP. Zn(2+) contacts are provided by Cys150 and Cys153. Positions 160 and 171 each coordinate AMP. Glu199 lines the ATP pocket.

The protein belongs to the adenylate kinase family. As to quaternary structure, monomer.

The protein localises to the cytoplasm. It catalyses the reaction AMP + ATP = 2 ADP. It participates in purine metabolism; AMP biosynthesis via salvage pathway; AMP from ADP: step 1/1. Functionally, catalyzes the reversible transfer of the terminal phosphate group between ATP and AMP. Plays an important role in cellular energy homeostasis and in adenine nucleotide metabolism. The polypeptide is Adenylate kinase (Acetivibrio thermocellus (strain ATCC 27405 / DSM 1237 / JCM 9322 / NBRC 103400 / NCIMB 10682 / NRRL B-4536 / VPI 7372) (Clostridium thermocellum)).